The chain runs to 260 residues: Centromere protein K (260 aa).

A coiled-coil region spans residues 84–173 (EEELQKVKKE…KKLMNALGEF (90 aa)).

Belongs to the CENP-K/MCM22 family. As to quaternary structure, component of the CENPA-HI complex, at least composed of CENPH, CENPI, CENPK, CENPL, CENPM, CENPO and CENPP.

Its subcellular location is the nucleus. It localises to the chromosome. It is found in the centromere. The protein resides in the kinetochore. Its function is as follows. Component of the CENPA-HI complex, a centromeric complex involved in assembly of kinetochore proteins, mitotic progression and chromosome segregation. In Gallus gallus (Chicken), this protein is Centromere protein K (CENPK).